The chain runs to 2060 residues: Fatty acid synthase subunit beta (2060 aa).

Residues methionine 1 to proline 32 are disordered. Residues proline 18–proline 32 are compositionally biased toward low complexity. The tract at residues valine 182–histidine 543 is acetyltransferase (AT) domain. The active-site For acetyltransferase activity is the serine 301. The tract at residues threonine 600–aspartate 845 is enoyl reductase (ER) domain. The dehydratase (DH) domain stretch occupies residues aspartate 1157–methionine 1640. The MaoC-like domain occupies phenylalanine 1549–alanine 1661. The interval leucine 1679–serine 2043 is malonyl/palmitoyl transferase (MT/PT) domain. Serine 1824 acts as the For malonyltransferase activity in catalysis.

This sequence belongs to the fungal fatty acid synthetase subunit beta family. [Alpha(6)beta(6)] hexamers of two multifunctional subunits (alpha and beta).

The catalysed reaction is acetyl-CoA + n malonyl-CoA + 2n NADPH + 4n H(+) = a long-chain-acyl-CoA + n CoA + n CO2 + 2n NADP(+).. It carries out the reaction holo-[ACP] + acetyl-CoA = acetyl-[ACP] + CoA. It catalyses the reaction holo-[ACP] + malonyl-CoA = malonyl-[ACP] + CoA. The enzyme catalyses a (3R)-hydroxyacyl-[ACP] = a (2E)-enoyl-[ACP] + H2O. The catalysed reaction is a 2,3-saturated acyl-[ACP] + NAD(+) = a (2E)-enoyl-[ACP] + NADH + H(+). It carries out the reaction (9Z)-octadecenoyl-[ACP] + H2O = (9Z)-octadecenoate + holo-[ACP] + H(+). It functions in the pathway mycotoxin biosynthesis. Its function is as follows. Fatty acid synthase subunit beta; part of the gene cluster that mediates the biosynthesis of gramillins A and B, bicyclic lipopeptides that induce cell death in maize leaves but not in wheat leaves. The nonribosomal peptide synthetase GRA1 incorporates respectively a glutamic adic (Glu), a leucine (Leu), a serine (Ser), a hydroxyglutamine (HOGln), a 2-amino decanoic acid, and 2 cysteins (CysB and CysA). The biosynthesis of 2-amino decanoic acid incorporated in gramillins could be initiated by a fatty acid synthase composed of the alpha and beta subunits FGSG_00036 and FGSG_11656. The cytochrome P450 monooxygenase FGSG_15680 could hydroxylate the fatty acid chain. Subsequent oxidation to the ketone by the oxidoreductase FGSG_00048 and transamination by aminotransferase FGSG_00049 could form 2-amino-decanoic acid. On the other hand, FGSG_15680 could also be responsible for the HO-modified glutamine at the gamma-position. Whether hydroxylation occurs on the fully assembled product or on the Gln residue prior to assembly into the gramillins requires further proof. The thioredoxin FGSG_00043 could also be required for the disulfide-bond formation between CysA and CysB. The specific involvement of the remaining proteins from the cluster is more difficult to discern, but could have broader regulatory (FGSG_00040 and FGSG_11657) or enzymatic functions (FGSG_00044 and FGSG_00045). The final C-domain of GRA1 does not possess the expected sequence of a termination CT domain, often implicated in macrocyclization and release of a cyclopeptidein fungal NRPs; and the thioesterase FGSG_00047 may act in concert with the terminal C-domain of GRA1 to catalyze the formation of the macrocyclic anhydride and release of the products. The polypeptide is Fatty acid synthase subunit beta (Gibberella zeae (strain ATCC MYA-4620 / CBS 123657 / FGSC 9075 / NRRL 31084 / PH-1) (Wheat head blight fungus)).